A 73-amino-acid polypeptide reads, in one-letter code: DNA-directed RNA polymerase subunit epsilon (73 aa).

This sequence belongs to the RNA polymerase subunit epsilon family. RNAP is composed of a core of 2 alpha, a beta and a beta' subunit. The core is associated with a delta subunit, and at least one of epsilon or omega. When a sigma factor is associated with the core the holoenzyme is formed, which can initiate transcription.

It catalyses the reaction RNA(n) + a ribonucleoside 5'-triphosphate = RNA(n+1) + diphosphate. A non-essential component of RNA polymerase (RNAP). The protein is DNA-directed RNA polymerase subunit epsilon of Lactobacillus acidophilus (strain ATCC 700396 / NCK56 / N2 / NCFM).